A 720-amino-acid polypeptide reads, in one-letter code: DNA replication licensing factor mcm7 (720 aa).

The C4-type zinc-finger motif lies at 183–210 (CDQCGAETYQPIQSPTFMPLIMCPSREC). The MCM domain occupies 331–537 (FYEKLAASIA…NDLRLAQHIT (207 aa)). ATP is bound by residues Tyr-344, Gly-383, Ala-385, Lys-386, Ser-387, Asn-488, Arg-513, and Arg-603. Residues 512-515 (SRFD) carry the Arginine finger motif.

The protein belongs to the MCM family. Component of the mcm2-7 complex (RLF-M). The complex forms a toroidal hexameric ring with the proposed subunit order mcm2-mcm6-mcm4-mcm7-mcm3-mcm5. The heterodimer of mmcm3/mcm5 interacts with mcm4, mmcm6, mcm7 and weakly with mcm2. The N-terminus is required for interaction with mmcm3, though this interaction may not be direct, and remains in a complex with mmcm3 throughout the cell cycle. Begins to associate with zmcm6 at the neurula stage. Component of the replisome complex. Component of the CMG helicase complex, composed of the mcm2-7 complex, the GINS complex and cdc45. Ubiquitinated by traip when forks converge following formation of DNA interstrand cross-links. Short ubiquitin chains on mcm7 promote recruitment of DNA glycosylase neil3. If the interstrand cross-link cannot be cleaved by neil3, the ubiquitin chains continue to grow on mcm7, promoting the unloading of the CMG helicase complex by the vcp/p97 ATPase.

It localises to the nucleus. The protein resides in the chromosome. It catalyses the reaction ATP + H2O = ADP + phosphate + H(+). Its function is as follows. Acts as a component of the mcm2-7 complex (mcm complex) which is the putative replicative helicase essential for 'once per cell cycle' DNA replication initiation and elongation in eukaryotic cells. The active ATPase sites in the mcm2-7 ring are formed through the interaction surfaces of two neighboring subunits such that a critical structure of a conserved arginine finger motif is provided in trans relative to the ATP-binding site of the Walker A box of the adjacent subunit. The six ATPase active sites, however, are likely to contribute differentially to the complex helicase activity. The existence of maternal and zygotic forms of mcm3 and mcm6 suggests that specific forms of mcm2-7 complexes may be used during different stages of development. The chain is DNA replication licensing factor mcm7 from Xenopus tropicalis (Western clawed frog).